We begin with the raw amino-acid sequence, 207 residues long: Casparian strip membrane protein 1 (207 aa).

Over residues 1–12 (MEADSTTINVTE) the composition is skewed to polar residues. The segment at 1 to 20 (MEADSTTINVTETPKERKGK) is disordered. Over 1–48 (MEADSTTINVTETPKERKGKAPLLAAPPASSGVKRVLQKAPKGGYKRG) the chain is Cytoplasmic. A helical membrane pass occupies residues 49 to 69 (LAVFDVVLRLAGIATALGAAI). Over 70–98 (AMGSTDQTLPFFTQFFQFKAEFDDLPAFT) the chain is Extracellular. A helical transmembrane segment spans residues 99–119 (FFVIANAITAAYLALTIPISI). At 120–131 (VCIIRPHLVAPR) the chain is on the cytoplasmic side. Residues 132–152 (VLLIFLDTVMVALTTAAAGGT) traverse the membrane as a helical segment. Residues 153 to 184 (ASIVYLAHNGNSDANWPAICQQFNDXCQKVSG) lie on the Extracellular side of the membrane. The helical transmembrane segment at 185–205 (AVVASFLTVVVLMLLIVLSAF) threads the bilayer. Residues 206–207 (AL) are Cytoplasmic-facing.

This sequence belongs to the Casparian strip membrane proteins (CASP) family. Homodimer and heterodimers.

It is found in the cell membrane. Regulates membrane-cell wall junctions and localized cell wall deposition. Required for establishment of the Casparian strip membrane domain (CSD) and the subsequent formation of Casparian strips, a cell wall modification of the root endodermis that determines an apoplastic barrier between the intraorganismal apoplasm and the extraorganismal apoplasm and prevents lateral diffusion. The protein is Casparian strip membrane protein 1 of Cynara cardunculus var. scolymus (Globe artichoke).